The chain runs to 132 residues: Small ribosomal subunit protein uS8 (132 aa).

It belongs to the universal ribosomal protein uS8 family. As to quaternary structure, part of the 30S ribosomal subunit. Contacts proteins S5 and S12.

In terms of biological role, one of the primary rRNA binding proteins, it binds directly to 16S rRNA central domain where it helps coordinate assembly of the platform of the 30S subunit. The protein is Small ribosomal subunit protein uS8 of Francisella tularensis subsp. tularensis (strain FSC 198).